The chain runs to 649 residues: Lysophospholipase (649 aa).

A signal peptide spans Met1 to Ala21. N-linked (GlcNAc...) asparagine glycans are attached at residues Asn32, Asn51, Asn77, Asn90, Asn121, Asn158, Asn168, Asn213, Asn275, Asn343, Asn386, Asn457, Asn487, Asn511, Asn539, Asn563, and Asn580. Residues Ser34–Asp584 form the PLA2c domain.

It belongs to the lysophospholipase family.

Its subcellular location is the secreted. It catalyses the reaction a 1-acyl-sn-glycero-3-phosphocholine + H2O = sn-glycerol 3-phosphocholine + a fatty acid + H(+). Its function is as follows. Catalyzes the release of fatty acids from lysophospholipids. This chain is Lysophospholipase, found in Torulaspora delbrueckii (Yeast).